A 426-amino-acid polypeptide reads, in one-letter code: Peptidoglycan DD-endopeptidase ShyB (426 aa).

Residues 1–21 (MGQFRFLALIVAVLCFSVALF) form the signal peptide. Polar residues predominate over residues 32-48 (SYSVPLNQSVNTSQPPS). Residues 32 to 55 (SYSVPLNQSVNTSQPPSSEMVPSD) form a disordered region. Zn(2+)-binding residues include His-291, Asp-295, and His-372.

Belongs to the peptidase M23B family. As to quaternary structure, monomer. The cofactor is Zn(2+).

It localises to the periplasm. It functions in the pathway cell wall degradation; peptidoglycan degradation. Its activity is regulated as follows. Not inhibited by metal chelator EDTA. In terms of biological role, cell wall peptidoglycan (PG) DD-endopeptidase, which may act as a substitute for other zinc-dependent PG endopeptidases (ShyA and ShyC) during zinc starvation. Hydrolyzes peptide cross-links which covalently connect adjacent PG strands probably to allow insertion of new glycans and thus cell wall expansion. Degrades purified whole PG sacculi in vitro. It is unclear how it is able to function in low zinc environments, but that may possibly be due to binding zinc with very high affinity, utilizing an alternative metal cofactor or that it may function independently of a bound metal cofactor. The chain is Peptidoglycan DD-endopeptidase ShyB from Vibrio cholerae serotype O1 (strain ATCC 39315 / El Tor Inaba N16961).